The following is a 453-amino-acid chain: Odorant receptor 83a (453 aa).

Residues 1–28 (MKSTFKEERIKDDSKRRDLFVFVRQTMC) lie on the Cytoplasmic side of the membrane. The helical transmembrane segment at 29–49 (IAAMYPFGYYVNGSGVLAVLV) threads the bilayer. At 50 to 85 (RFCDLTYELFNYFVSVHIAGLYICTIYINYGQGDLD) the chain is on the extracellular side. A helical transmembrane segment spans residues 86 to 106 (FFVNCLIQTIIYLWTIAMKLY). The Cytoplasmic portion of the chain corresponds to 107-148 (FRRFRPGLLNTILSNINDEYETRSAVGFSFVTMAGSYRMSKL). The helical transmembrane segment at 149–169 (WIKTYVYCCYIGTIFWLALPI) threads the bilayer. The Extracellular portion of the chain corresponds to 170 to 203 (AYRDRSLPLACWYPFDYTQPGVYEVVFLLQAMGQ). The helical transmembrane segment at 204-224 (IQVAASFASSSGLHMVLCVLI) threads the bilayer. The Cytoplasmic portion of the chain corresponds to 225 to 322 (SGQYDVLFCS…ALKKIESFYS (98 aa)). The chain crosses the membrane as a helical span at residues 323-343 (PIWFVKIGEVTFLMCLVAFVS). The Extracellular segment spans residues 344–359 (TKSTAANSFMRMVSLG). The helical transmembrane segment at 360-380 (QYLLLVLYELFIICYFADIVF) threads the bilayer. The Cytoplasmic portion of the chain corresponds to 381 to 408 (QNSQRCGEALWRSPWQRHLKDVRSDYMF). The helical transmembrane segment at 409–429 (FMLNSRRQFQLTAGKISNLNV) threads the bilayer. Over 430–453 (DRFRGTITTAFSFLTLLQKMDARE) the chain is Extracellular.

It belongs to the insect chemoreceptor superfamily. Heteromeric odorant receptor channel (TC 1.A.69) family. Or2a subfamily. In terms of assembly, interacts with Orco. Complexes exist early in the endomembrane system in olfactory sensory neurons (OSNs), coupling these complexes to the conserved ciliary trafficking pathway.

The protein localises to the cell membrane. In terms of biological role, odorant receptor which mediates acceptance or avoidance behavior, depending on its substrates. The odorant receptor repertoire encodes a large collection of odor stimuli that vary widely in identity, intensity, and duration. May form a complex with Orco to form odorant-sensing units, providing sensitive and prolonged odorant signaling and calcium permeability. Involved in the behavioral responses to pentanol, ethyl acetate, and propyl acetate. This is Odorant receptor 83a (Or83a) from Drosophila melanogaster (Fruit fly).